We begin with the raw amino-acid sequence, 505 residues long: ATP synthase subunit alpha, chloroplastic (505 aa).

170–177 is an ATP binding site; it reads GDRQTGKT.

Belongs to the ATPase alpha/beta chains family. F-type ATPases have 2 components, CF(1) - the catalytic core - and CF(0) - the membrane proton channel. CF(1) has five subunits: alpha(3), beta(3), gamma(1), delta(1), epsilon(1). CF(0) has four main subunits: a, b, b' and c.

It is found in the plastid. Its subcellular location is the chloroplast thylakoid membrane. The enzyme catalyses ATP + H2O + 4 H(+)(in) = ADP + phosphate + 5 H(+)(out). In terms of biological role, produces ATP from ADP in the presence of a proton gradient across the membrane. The alpha chain is a regulatory subunit. This Phaeodactylum tricornutum (strain CCAP 1055/1) protein is ATP synthase subunit alpha, chloroplastic.